The following is a 183-amino-acid chain: uncharacterized protein (183 aa).

The signal sequence occupies residues 1-17; sequence MVLFILVLYTCIQDGNG.

This is an uncharacterized protein from Saccharomyces cerevisiae (strain ATCC 204508 / S288c) (Baker's yeast).